Consider the following 166-residue polypeptide: MISDESDRFNPRDPKPADAGKPSKSAKRREARKLATQALYQWHMAQHSLNEIEAQFRVDNDFTDVDGAYFREILHGVPAIKSEIDSALKPCMDIALEELDPVELAVLRLSTWEFIKRVDVPYRVVINEGVELAKVFGATDGHKFVNGVLDKLAPSLREAEVKANKR.

The span at 1-18 shows a compositional bias: basic and acidic residues; sequence MISDESDRFNPRDPKPAD. The segment at 1-28 is disordered; the sequence is MISDESDRFNPRDPKPADAGKPSKSAKR.

Belongs to the NusB family.

Functionally, involved in transcription antitermination. Required for transcription of ribosomal RNA (rRNA) genes. Binds specifically to the boxA antiterminator sequence of the ribosomal RNA (rrn) operons. This is Transcription antitermination protein NusB from Pseudomonas putida (strain W619).